Reading from the N-terminus, the 83-residue chain is uncharacterized protein (83 aa).

A helical transmembrane segment spans residues 58 to 78 (AVLLWIAIIATLGNIVVVGVV).

Its subcellular location is the membrane. This is an uncharacterized protein from Homo sapiens (Human).